A 465-amino-acid polypeptide reads, in one-letter code: Cysteine--tRNA ligase (465 aa).

Cys-28 contributes to the Zn(2+) binding site. A 'HIGH' region motif is present at residues 30-40 (PTVYNYIHIGN). Residues Cys-208, His-233, and Glu-237 each contribute to the Zn(2+) site. A 'KMSKS' region motif is present at residues 265-269 (KMSKS). Position 268 (Lys-268) interacts with ATP.

Belongs to the class-I aminoacyl-tRNA synthetase family. Monomer. Zn(2+) is required as a cofactor.

The protein resides in the cytoplasm. It catalyses the reaction tRNA(Cys) + L-cysteine + ATP = L-cysteinyl-tRNA(Cys) + AMP + diphosphate. The polypeptide is Cysteine--tRNA ligase (Exiguobacterium sibiricum (strain DSM 17290 / CCUG 55495 / CIP 109462 / JCM 13490 / 255-15)).